The chain runs to 1580 residues: Pentafunctional AROM polypeptide (1580 aa).

A 3-dehydroquinate synthase region spans residues 1–381; sequence MATPTVIKIL…HEQKASVVSN (381 aa). NAD(+)-binding positions include 44–46, 81–84, 114–116, and D119; these read DTT, EVSK, and GGV. R130 contacts 7-phospho-2-dehydro-3-deoxy-D-arabino-heptonate. 139-140 serves as a coordination point for NAD(+); sequence TT. 2 residues coordinate 7-phospho-2-dehydro-3-deoxy-D-arabino-heptonate: D146 and K152. K161 is an NAD(+) binding site. 7-phospho-2-dehydro-3-deoxy-D-arabino-heptonate is bound at residue N162. NAD(+)-binding positions include 179–182 and N190; that span reads FLNT. E194 provides a ligand contact to Zn(2+). K247 serves as a coordination point for 7-phospho-2-dehydro-3-deoxy-D-arabino-heptonate. The active-site Proton acceptor; for 3-dehydroquinate synthase activity is the E257. 7-phospho-2-dehydro-3-deoxy-D-arabino-heptonate is bound by residues 261–265 and H268; that span reads RNLLN. H268 contributes to the Zn(2+) binding site. H272 serves as the catalytic Proton acceptor; for 3-dehydroquinate synthase activity. Positions 284 and 353 each coordinate 7-phospho-2-dehydro-3-deoxy-D-arabino-heptonate. Residue H284 coordinates Zn(2+). The segment at 394-838 is EPSP synthase; sequence VSPGVPHALE…WDTLAQLFKA (445 aa). The active-site For EPSP synthase activity is the C820. The interval 857 to 1048 is shikimate kinase; sequence ASLFIIGMRG…KKKPQSFFVS (192 aa). Residue 863 to 870 participates in ATP binding; sequence GMRGAGKT. The tract at residues 1049–1269 is 3-dehydroquinase; that stretch reads LTLPDLRPSV…AAPGQLSAKE (221 aa). H1172 serves as the catalytic Proton acceptor; for 3-dehydroquinate dehydratase activity. K1200 (schiff-base intermediate with substrate; for 3-dehydroquinate dehydratase activity) is an active-site residue. Residues 1282–1580 form a shikimate dehydrogenase region; sequence SKKFAIVGKP…AAVMNADADI (299 aa).

In the N-terminal section; belongs to the sugar phosphate cyclases superfamily. Dehydroquinate synthase family. This sequence in the 2nd section; belongs to the EPSP synthase family. It in the 3rd section; belongs to the shikimate kinase family. The protein in the 4th section; belongs to the type-I 3-dehydroquinase family. In the C-terminal section; belongs to the shikimate dehydrogenase family. As to quaternary structure, homodimer. Zn(2+) is required as a cofactor.

It localises to the cytoplasm. The enzyme catalyses 7-phospho-2-dehydro-3-deoxy-D-arabino-heptonate = 3-dehydroquinate + phosphate. It catalyses the reaction 3-dehydroquinate = 3-dehydroshikimate + H2O. The catalysed reaction is shikimate + NADP(+) = 3-dehydroshikimate + NADPH + H(+). It carries out the reaction shikimate + ATP = 3-phosphoshikimate + ADP + H(+). The enzyme catalyses 3-phosphoshikimate + phosphoenolpyruvate = 5-O-(1-carboxyvinyl)-3-phosphoshikimate + phosphate. Its pathway is metabolic intermediate biosynthesis; chorismate biosynthesis; chorismate from D-erythrose 4-phosphate and phosphoenolpyruvate: step 2/7. The protein operates within metabolic intermediate biosynthesis; chorismate biosynthesis; chorismate from D-erythrose 4-phosphate and phosphoenolpyruvate: step 3/7. It participates in metabolic intermediate biosynthesis; chorismate biosynthesis; chorismate from D-erythrose 4-phosphate and phosphoenolpyruvate: step 4/7. It functions in the pathway metabolic intermediate biosynthesis; chorismate biosynthesis; chorismate from D-erythrose 4-phosphate and phosphoenolpyruvate: step 5/7. Its pathway is metabolic intermediate biosynthesis; chorismate biosynthesis; chorismate from D-erythrose 4-phosphate and phosphoenolpyruvate: step 6/7. The AROM polypeptide catalyzes 5 consecutive enzymatic reactions in prechorismate polyaromatic amino acid biosynthesis. The polypeptide is Pentafunctional AROM polypeptide (Uncinocarpus reesii (strain UAMH 1704)).